The chain runs to 369 residues: MSRGQELVLLTGATGHVGYAVLVKTLQAGYNVRATLRDMSRADAILSSGPVQEALSAQDLDLSFVRVPNFTAPDAFGLVLSNVTHVVHVASALRRGTSTDLKEAIIDVAVQGTRNILRAAHNCPSVRRVVITSSVSAIVDQHPVVSQSPAGRCVTPLDRHADYDAEYYKGDSLKAYTAAKTAALNATDAFLATADGGPTTLPLHFDVINIMPSFVFGPKGLAATPSDVTNGSNIFGIGLVMRHKPWDGIRLEAVCCHVDDVAQVHVNALNDHELLPLKVGAHRDFILGVKFKPEEIGEIVRRRFPREWWESESATFGARGTYDWYHTDYDVGSAERLLGRPFKCLEEQIYDSGSQVMEMLKGMTTRSYN.

Tyr-176 is an NADP(+) binding site.

It belongs to the NAD(P)-dependent epimerase/dehydratase family. Dihydroflavonol-4-reductase subfamily.

Its pathway is mycotoxin biosynthesis. Functionally, NAD-dependent epimerase/dehydratase; part of the gene cluster that mediates the biosynthesis of fumonisins B1 (FB1), B2 (FB2), B3 (FB3), and B4 (FB4), which are carcinogenic mycotoxins. Within the pathway, FUM13 stereospecifically reduces the intermediate 3-keto intermediate 2-amino-3-oxo-12,16-dimethylicosane to the 3-hydroxyl product 2-amino-3-hydroxy-12,16-dimethylicosane. The biosynthesis starts with the FUM1-catalyzed carbon chain assembly from one molecule of acetyl-CoA, eight molecules of malonyl-CoA, and two molecules of methionine (in S-adenosyl form). The C18 polyketide chain is released from the enzyme by a nucleophilic attack of a carbanion, which is derived from R-carbon of alanine by decarboxylation, on the carbonyl carbon of polyketide acyl chain. This step is catalyzed by the pyridoxal 5'-phosphate-dependent aminoacyl transferase FUM8. The resultant 3-keto intermediate is then stereospecifically reduced to a 3-hydroxyl product by reductase FUM13. Subsequent oxidations at C-10 by the cytochrome P450 monooxygenase FUM2, C-14 and C-15 by FUM6, FUM12 or FUM15, tricarballylic esterification of the hydroxyl groups on C-14 and C-15 by acyltransferase FUM14, and C-5 hydroxylation by 2-keto-glutarate-dependent dioxygenase FUM3 furnish the biosynthesis of fumonisins. The tricarballylic moieties are most likely derived from the citric acid cycle, and their addition to the carbon backbone may involve FUM7, FUM10, FUM11 and FUM14. In Gibberella moniliformis (strain M3125 / FGSC 7600) (Maize ear and stalk rot fungus), this protein is NAD-dependent epimerase/dehydratase FUM13.